Consider the following 150-residue polypeptide: Arginine repressor (150 aa).

Belongs to the ArgR family.

It is found in the cytoplasm. Its pathway is amino-acid biosynthesis; L-arginine biosynthesis [regulation]. Regulates arginine biosynthesis genes. The sequence is that of Arginine repressor from Clostridium botulinum (strain Loch Maree / Type A3).